Here is a 72-residue protein sequence, read N- to C-terminus: Protein RALF-like 11 (72 aa).

The N-terminal stretch at 1 to 17 is a signal peptide; the sequence is MKAWLICLLVICAAVIA. 2 disulfides stabilise this stretch: C34–C43 and C63–C69.

Belongs to the plant rapid alkalinization factor (RALF) family.

The protein resides in the secreted. Functionally, cell signaling peptide that may regulate plant stress, growth, and development. Mediates a rapid alkalinization of extracellular space by mediating a transient increase in the cytoplasmic Ca(2+) concentration leading to a calcium-dependent signaling events through a cell surface receptor and a concomitant activation of some intracellular mitogen-activated protein kinases. The sequence is that of Protein RALF-like 11 (RALFL11) from Arabidopsis thaliana (Mouse-ear cress).